Consider the following 321-residue polypeptide: Lipoyl synthase (321 aa).

Residues C68, C73, C79, C94, C98, C101, and S308 each contribute to the [4Fe-4S] cluster site. The Radical SAM core domain maps to 80 to 297; the sequence is FNHGTATFMI…KAEAIAMGFT (218 aa).

The protein belongs to the radical SAM superfamily. Lipoyl synthase family. Requires [4Fe-4S] cluster as cofactor.

It localises to the cytoplasm. The catalysed reaction is [[Fe-S] cluster scaffold protein carrying a second [4Fe-4S](2+) cluster] + N(6)-octanoyl-L-lysyl-[protein] + 2 oxidized [2Fe-2S]-[ferredoxin] + 2 S-adenosyl-L-methionine + 4 H(+) = [[Fe-S] cluster scaffold protein] + N(6)-[(R)-dihydrolipoyl]-L-lysyl-[protein] + 4 Fe(3+) + 2 hydrogen sulfide + 2 5'-deoxyadenosine + 2 L-methionine + 2 reduced [2Fe-2S]-[ferredoxin]. The protein operates within protein modification; protein lipoylation via endogenous pathway; protein N(6)-(lipoyl)lysine from octanoyl-[acyl-carrier-protein]: step 2/2. Its function is as follows. Catalyzes the radical-mediated insertion of two sulfur atoms into the C-6 and C-8 positions of the octanoyl moiety bound to the lipoyl domains of lipoate-dependent enzymes, thereby converting the octanoylated domains into lipoylated derivatives. The sequence is that of Lipoyl synthase from Pectobacterium carotovorum subsp. carotovorum (strain PC1).